The chain runs to 74 residues: Translation initiation factor IF-1 (74 aa).

The region spanning 1 to 72 (MSKQDLIEME…TKGRITYRLR (72 aa)) is the S1-like domain.

Belongs to the IF-1 family. As to quaternary structure, component of the 30S ribosomal translation pre-initiation complex which assembles on the 30S ribosome in the order IF-2 and IF-3, IF-1 and N-formylmethionyl-tRNA(fMet); mRNA recruitment can occur at any time during PIC assembly.

It localises to the cytoplasm. Functionally, one of the essential components for the initiation of protein synthesis. Stabilizes the binding of IF-2 and IF-3 on the 30S subunit to which N-formylmethionyl-tRNA(fMet) subsequently binds. Helps modulate mRNA selection, yielding the 30S pre-initiation complex (PIC). Upon addition of the 50S ribosomal subunit IF-1, IF-2 and IF-3 are released leaving the mature 70S translation initiation complex. This chain is Translation initiation factor IF-1, found in Trichodesmium erythraeum (strain IMS101).